Reading from the N-terminus, the 144-residue chain is Large ribosomal subunit protein uL15 (144 aa).

The segment at 1 to 54 (MRLNTLSPAEGSKKAGKRLGRGIGSGLGKTGGRGHKGQNSRSGGGVRRGFEGGQ) is disordered. Positions 21 to 31 (RGIGSGLGKTG) are enriched in gly residues.

The protein belongs to the universal ribosomal protein uL15 family. In terms of assembly, part of the 50S ribosomal subunit.

Functionally, binds to the 23S rRNA. This chain is Large ribosomal subunit protein uL15, found in Enterobacter sp. (strain 638).